The chain runs to 562 residues: Pentatricopeptide repeat-containing protein At3g22670, mitochondrial (562 aa).

The transit peptide at 1–31 (MLTKLRISKLVSYTLPRRIFQRRFLVTNNTA) directs the protein to the mitochondrion. 10 PPR repeats span residues 165–199 (SGHT…EESK), 202–232 (TLDT…MEKS), 238–268 (DTIA…LFDT), 272–306 (DART…EFTP), 307–341 (DVVT…GCNP), 342–376 (NVVT…GCVP), 377–411 (DAKF…GVRR), 412–446 (DVLV…EGES), 450–484 (NVET…DVSI), and 485–519 (DVST…GMVP).

It belongs to the PPR family. P subfamily.

Its subcellular location is the mitochondrion. The chain is Pentatricopeptide repeat-containing protein At3g22670, mitochondrial from Arabidopsis thaliana (Mouse-ear cress).